The chain runs to 366 residues: Histidinol-phosphate aminotransferase (366 aa).

K228 carries the N6-(pyridoxal phosphate)lysine modification.

Belongs to the class-II pyridoxal-phosphate-dependent aminotransferase family. Histidinol-phosphate aminotransferase subfamily. As to quaternary structure, homodimer. Pyridoxal 5'-phosphate serves as cofactor.

The catalysed reaction is L-histidinol phosphate + 2-oxoglutarate = 3-(imidazol-4-yl)-2-oxopropyl phosphate + L-glutamate. It functions in the pathway amino-acid biosynthesis; L-histidine biosynthesis; L-histidine from 5-phospho-alpha-D-ribose 1-diphosphate: step 7/9. The sequence is that of Histidinol-phosphate aminotransferase from Corynebacterium diphtheriae (strain ATCC 700971 / NCTC 13129 / Biotype gravis).